A 339-amino-acid chain; its full sequence is tRNA N6-adenosine threonylcarbamoyltransferase (339 aa).

Fe cation-binding residues include His111 and His115. Substrate-binding positions include 134–138, Asp167, Gly180, and Asn272; that span reads LVSGG. Asp300 provides a ligand contact to Fe cation.

Belongs to the KAE1 / TsaD family. Requires Fe(2+) as cofactor.

The protein localises to the cytoplasm. The enzyme catalyses L-threonylcarbamoyladenylate + adenosine(37) in tRNA = N(6)-L-threonylcarbamoyladenosine(37) in tRNA + AMP + H(+). Functionally, required for the formation of a threonylcarbamoyl group on adenosine at position 37 (t(6)A37) in tRNAs that read codons beginning with adenine. Is involved in the transfer of the threonylcarbamoyl moiety of threonylcarbamoyl-AMP (TC-AMP) to the N6 group of A37, together with TsaE and TsaB. TsaD likely plays a direct catalytic role in this reaction. This Vibrio vulnificus (strain YJ016) protein is tRNA N6-adenosine threonylcarbamoyltransferase.